Reading from the N-terminus, the 2486-residue chain is Nonribosomal peptide synthetase nanA (2486 aa).

The tract at residues 231-637 (FSARQPLSPA…GRRGTQVKLR (407 aa)) is adenylation 1. Residues 786-860 (TDIELKVHAL…DLARSAKETS (75 aa)) enclose the Carrier 1 domain. Serine 820 is subject to O-(pantetheine 4'-phosphoryl)serine. The condensation 1 stretch occupies residues 902–1314 (EDAYPCTPLQ…LKSVPRVSSQ (413 aa)). The interval 1339–1735 (RAQARKTPLA…GRIGDQMKIR (397 aa)) is adenylation 2. Carrier domains follow at residues 1872 to 1948 (PPST…SSAS) and 2404 to 2480 (SSSE…QTQA). 2 positions are modified to O-(pantetheine 4'-phosphoryl)serine: serine 1909 and serine 2441. Residues 2404-2480 (SSSETIVEPL…KLARLLQTQA (77 aa)) form a condensation 2 region.

Belongs to the NRP synthetase family.

The protein operates within secondary metabolite biosynthesis. In terms of biological role, nonribosomal peptide synthetase; part of the gene cluster that mediates the biosynthesis of the benzazepine alkaloid nanangelenin A which contains an unprecedented 3,4-dihydro-1-benzazepine-2,5-dione-N-prenyl-N-acetoxy-anthranilamide scaffold. The first step of nanangelenin biosynthesis is catalyzed by the indoleamine 2,3-dioxygenase nanC which produces N-formyl-kynurenine through the catabolism of tryptophan. The two-module NRPS nanA then utilizes anthranilate (Ant) and L-kynurenine (L-Kyn) to assemble the dipeptide product nanangelenin B. The first adenylation domain of nanA (A1) loads anthranilate onto the T1 domain, while A2 loads kynurenine, generated through spontaneous nonenzymatic deformylation of the nanC-supplied N-formyl-kynurenine. The peptide bond formation between the tethered amino acids is catalyzed by the first condensation domain (C1) between anthranilate's carbonyl carbon and kynurenine's aliphatic primary amine. The second C domain (C2) catalyzes the final cyclization event between the aromatic amine of kynurenine and the tethered carbonyl carbon, yielding nanangelenin B. The terminal T3 domain enhances the catalytic efficiency of C2, suggesting the T2-tethered Ant-L-Kyn is transferred to T3 prior to cyclization by C2. Once released from nanA, nanangelenin B is then prenylated by the prenyltransferase nanD to form nanangelenin C. Nanangelenin C is then N-hydroxylated by the FAD-dependent monooxygenase nanF and further acetylated by the acetyltransferase nanB to yield nanangelenin F. Finally, the N-methyltransferase nanE methylates the amide nitrogen of 1-benzazepine to convert nanangelenin F into nanangelenin A. NanE is also able to methylate most of the intermediates of the pathway such as nanangelenin B and nanangelenin C to produce nanangelenin D and nanangelenin E, respectively. The chain is Nonribosomal peptide synthetase nanA from Aspergillus nanangensis.